The chain runs to 503 residues: Lysine--tRNA ligase (503 aa).

The Mg(2+) site is built by Glu-414 and Glu-421.

It belongs to the class-II aminoacyl-tRNA synthetase family. In terms of assembly, homodimer. Requires Mg(2+) as cofactor.

It localises to the cytoplasm. It carries out the reaction tRNA(Lys) + L-lysine + ATP = L-lysyl-tRNA(Lys) + AMP + diphosphate. The sequence is that of Lysine--tRNA ligase from Neisseria gonorrhoeae (strain ATCC 700825 / FA 1090).